A 256-amino-acid chain; its full sequence is uncharacterized protein (256 aa).

Residues 1–23 (MIPPCENAPHIIYHESQRGTRDR) are disordered. Basic and acidic residues predominate over residues 12–23 (IYHESQRGTRDR).

This is an uncharacterized protein from Homo sapiens (Human).